A 1783-amino-acid polypeptide reads, in one-letter code: Chitin synthase A (1783 aa).

Asn-159, Asn-637, Asn-652, Asn-664, and Asn-669 each carry an N-linked (GlcNAc...) asparagine glycan. The next 2 membrane-spanning stretches (helical) occupy residues 745 to 765 (IWVAIVWFWTFWIPSPLLSFV) and 781 to 801 (LTLVWFIVLINAAIVFWIVAF). 2 N-linked (GlcNAc...) asparagine glycosylation sites follow: Asn-1014 and Asn-1018. The chain crosses the membrane as a helical span at residues 1051-1071 (IMLAMTIILCSVILVKFLAAL). Asn-1416 carries an N-linked (GlcNAc...) asparagine glycan. Helical transmembrane passes span 1441–1461 (FVVFIDLFGTIILPATTIYLG), 1474–1494 (FPIISIIMLAAVYGLQALIFI), and 1502–1522 (IGWMIIYIMAFPIYSFALPIY). Residues Asn-1529 and Asn-1617 are each glycosylated (N-linked (GlcNAc...) asparagine). The segment at 1659-1724 (THDINRGQTP…SFDFQRGNMQ (66 aa)) is disordered. Residues 1664–1688 (RGQTPFQDFPSSRPSVSNLRGQANP) show a composition bias toward polar residues. The N-linked (GlcNAc...) asparagine glycan is linked to Asn-1695. The DEK-C domain maps to 1725-1781 (GPDDSMIIEAIQGVLREVDLDTVTKKQVRALVEQRLQTGLVGERRTFMDRQIDNELA).

The protein belongs to the chitin synthase family. Class V subfamily.

It localises to the cell membrane. It carries out the reaction [(1-&gt;4)-N-acetyl-beta-D-glucosaminyl](n) + UDP-N-acetyl-alpha-D-glucosamine = [(1-&gt;4)-N-acetyl-beta-D-glucosaminyl](n+1) + UDP + H(+). In terms of biological role, polymerizes chitin, a structural polymer of the cell wall and septum, by transferring the sugar moiety of UDP-GlcNAc to the non-reducing end of the growing chitin polymer. Responsible for about 29% of the chitin in conidial walls, is essential for conidial wall strength in media with high water potential and contributes to strength of hyphal tips. In Colletotrichum graminicola (Maize anthracnose fungus), this protein is Chitin synthase A.